The chain runs to 421 residues: Gamma-glutamyl phosphate reductase (421 aa).

It belongs to the gamma-glutamyl phosphate reductase family.

It is found in the cytoplasm. It carries out the reaction L-glutamate 5-semialdehyde + phosphate + NADP(+) = L-glutamyl 5-phosphate + NADPH + H(+). Its pathway is amino-acid biosynthesis; L-proline biosynthesis; L-glutamate 5-semialdehyde from L-glutamate: step 2/2. Functionally, catalyzes the NADPH-dependent reduction of L-glutamate 5-phosphate into L-glutamate 5-semialdehyde and phosphate. The product spontaneously undergoes cyclization to form 1-pyrroline-5-carboxylate. The protein is Gamma-glutamyl phosphate reductase of Nitrosospira multiformis (strain ATCC 25196 / NCIMB 11849 / C 71).